The primary structure comprises 192 residues: uncharacterized protein (192 aa).

The interval 71–100 (NNVLPEPSKPNNPVVNPPVSPIQPKTDPEQ) is disordered. Positions 77-91 (PSKPNNPVVNPPVSP) are enriched in pro residues.

This is an uncharacterized protein from Caenorhabditis elegans.